A 237-amino-acid polypeptide reads, in one-letter code: NAD-dependent protein deacylase (237 aa).

The Deacetylase sirtuin-type domain maps to 1–235 (MRVAVLSGAG…PGLLERLPAL (235 aa)). 8-28 (GAGISAESGVPTFRDDKNGLW) lines the NAD(+) pocket. Tyrosine 53 and arginine 56 together coordinate substrate. Position 86–89 (86–89 (QNVD)) interacts with NAD(+). The Proton acceptor role is filled by histidine 104. Zn(2+)-binding residues include cysteine 112, cysteine 115, cysteine 138, and cysteine 140. Residues 177 to 179 (GTS), 203 to 205 (NPE), and alanine 221 each bind NAD(+).

It belongs to the sirtuin family. Class III subfamily. It depends on Zn(2+) as a cofactor.

It localises to the cytoplasm. It catalyses the reaction N(6)-acetyl-L-lysyl-[protein] + NAD(+) + H2O = 2''-O-acetyl-ADP-D-ribose + nicotinamide + L-lysyl-[protein]. The enzyme catalyses N(6)-succinyl-L-lysyl-[protein] + NAD(+) + H2O = 2''-O-succinyl-ADP-D-ribose + nicotinamide + L-lysyl-[protein]. Functionally, NAD-dependent lysine deacetylase and desuccinylase that specifically removes acetyl and succinyl groups on target proteins. Modulates the activities of several proteins which are inactive in their acylated form. In Mycobacterium bovis (strain ATCC BAA-935 / AF2122/97), this protein is NAD-dependent protein deacylase.